A 351-amino-acid polypeptide reads, in one-letter code: MAAVPSTISWPQRLEQLLQGQDLSASEASSLMQAWLAEELSPVQTGAFLAGLRAKGMVADELAAMASVLRGACPLPCDRPNLAMVDTCGTGGDGADTFNISTAVAFTAAALGVNVAKHGNRSASGKVGSADVLEGLGLNLKAPLASVVEAISTTGVTFLFAPAWHPALVNLAPLRRSLGVRTVFNLLGPLVNPLQPQAQVLGVARADLLDPMAGALDQLGLDRAVVVHGAGGLDEASLAGANELRMVEAGKPIATRFVSPDDLGLAAAPLEALRGGDLADNQRILENVLKGEATPAQIDVVAFNTALVLWVAGVELDLKAAARRASDTLRDGLPWQKLQDLQRALSHGNGQ.

5-phospho-alpha-D-ribose 1-diphosphate is bound by residues G89, 92-93 (GD), T97, 99-102 (NIST), 117-125 (KHGNRSASG), and S129. G89 contributes to the anthranilate binding site. Position 101 (S101) interacts with Mg(2+). Residue N120 coordinates anthranilate. R175 contributes to the anthranilate binding site. D234 and E235 together coordinate Mg(2+).

Belongs to the anthranilate phosphoribosyltransferase family. Homodimer. It depends on Mg(2+) as a cofactor.

The enzyme catalyses N-(5-phospho-beta-D-ribosyl)anthranilate + diphosphate = 5-phospho-alpha-D-ribose 1-diphosphate + anthranilate. Its pathway is amino-acid biosynthesis; L-tryptophan biosynthesis; L-tryptophan from chorismate: step 2/5. Its function is as follows. Catalyzes the transfer of the phosphoribosyl group of 5-phosphorylribose-1-pyrophosphate (PRPP) to anthranilate to yield N-(5'-phosphoribosyl)-anthranilate (PRA). This Synechococcus sp. (strain CC9902) protein is Anthranilate phosphoribosyltransferase.